Reading from the N-terminus, the 220-residue chain is Pro-Pro endopeptidase (220 aa).

The signal sequence occupies residues 1–26 (MRPSKKLLIAIISIFLISSVPVSAHA). The ATLF-like domain occupies 35–220 (KDTLSQIVVF…TYSFLQNLAK (186 aa)). Interacts with substrate peptide regions lie at residues 101–103 (KGW) and 117–119 (GGS). His-142 lines the Zn(2+) pocket. Glu-143 serves as the catalytic Proton acceptor. Positions 146, 178, and 185 each coordinate Zn(2+).

Belongs to the peptidase M34 family. Pro-Pro endopeptidase subfamily. As to quaternary structure, monomer. The cofactor is Zn(2+).

Its subcellular location is the secreted. The enzyme catalyses The enzyme catalyzes the hydrolytic cleavage of peptide bonds between two proline residues.. With respect to regulation, is inhibited by the chelating agent o-phenanthroline in vitro. Functionally, zinc-dependent endoprotease with a unique preference for proline residues surrounding the scissile bond. Exhibits a high preference for an asparagine at the P2 position and hydrophobic residues (Val, Ile, Leu) at the P3 position. Efficiently cleaves the LPXTG cell surface proteins CD630_28310 and CD630_32460 at multiple cleavage sites in vivo. Has a role in the regulation of C.difficile adhesion versus motility by cleaving surface adhesion proteins such as the collagen binding protein CD630_28310, and is important for efficient infection. Is also able to cleave fibronectin and fibrinogen in vitro; cleaves at the N-terminus of the beta-chain of fibrinogen. Destabilizes the fibronectin network produced by human fibroblasts. Therefore, may be important in key steps of clostridial pathogenesis by degrading extracellular matrix components associated with the gut epithelial cells. To a lesser extent, IgA1, IgA2, and human HSP 90-beta, but not HSP 90-alpha, are also substrates for the enzyme. Is not active on different collagen types, casein and gelatin. This Clostridioides difficile (strain 630) (Peptoclostridium difficile) protein is Pro-Pro endopeptidase.